The sequence spans 520 residues: Transactivator/viroplasmin protein (520 aa).

2 disordered regions span residues 32–51 and 487–520; these read GSSQ…KEEA and QDAS…KQVD. A compositionally biased stretch (basic and acidic residues) spans 40 to 51; sequence SLHRETPEKEEA.

This sequence belongs to the caulimoviridae viroplasmin family.

The protein resides in the host cytoplasm. Functionally, enhances the ribosomal termination-reinitiation event leading to the translation of major open reading frames on the polycistronic viral RNAs. The sequence is that of Transactivator/viroplasmin protein from Arabidopsis thaliana (Mouse-ear cress).